An 89-amino-acid chain; its full sequence is Acylphosphatase (89 aa).

Residues 3–89 (RFTARVAGLV…QSDLTDFRRK (87 aa)) form the Acylphosphatase-like domain. Catalysis depends on residues arginine 18 and asparagine 36.

It belongs to the acylphosphatase family.

The catalysed reaction is an acyl phosphate + H2O = a carboxylate + phosphate + H(+). This chain is Acylphosphatase (acyP), found in Frankia casuarinae (strain DSM 45818 / CECT 9043 / HFP020203 / CcI3).